A 216-amino-acid polypeptide reads, in one-letter code: NADH-quinone oxidoreductase subunit C (216 aa).

This sequence belongs to the complex I 30 kDa subunit family. In terms of assembly, NDH-1 is composed of 14 different subunits. Subunits NuoB, C, D, E, F, and G constitute the peripheral sector of the complex.

Its subcellular location is the cell inner membrane. The enzyme catalyses a quinone + NADH + 5 H(+)(in) = a quinol + NAD(+) + 4 H(+)(out). Its function is as follows. NDH-1 shuttles electrons from NADH, via FMN and iron-sulfur (Fe-S) centers, to quinones in the respiratory chain. The immediate electron acceptor for the enzyme in this species is believed to be ubiquinone. Couples the redox reaction to proton translocation (for every two electrons transferred, four hydrogen ions are translocated across the cytoplasmic membrane), and thus conserves the redox energy in a proton gradient. The sequence is that of NADH-quinone oxidoreductase subunit C from Francisella tularensis subsp. holarctica (strain OSU18).